The primary structure comprises 220 residues: Ribose-5-phosphate isomerase A (220 aa).

Substrate-binding positions include 28-31 (TGST), 81-84 (DGAD), and 94-97 (KGGG). Residue glutamate 103 is the Proton acceptor of the active site. Residue lysine 121 coordinates substrate.

This sequence belongs to the ribose 5-phosphate isomerase family. In terms of assembly, homodimer.

It catalyses the reaction aldehydo-D-ribose 5-phosphate = D-ribulose 5-phosphate. It participates in carbohydrate degradation; pentose phosphate pathway; D-ribose 5-phosphate from D-ribulose 5-phosphate (non-oxidative stage): step 1/1. In terms of biological role, catalyzes the reversible conversion of ribose-5-phosphate to ribulose 5-phosphate. The chain is Ribose-5-phosphate isomerase A from Shewanella baltica (strain OS223).